The following is a 148-amino-acid chain: Large ribosomal subunit protein bL9 (148 aa).

It belongs to the bacterial ribosomal protein bL9 family.

Binds to the 23S rRNA. The protein is Large ribosomal subunit protein bL9 of Finegoldia magna (strain ATCC 29328 / DSM 20472 / WAL 2508) (Peptostreptococcus magnus).